Reading from the N-terminus, the 40-residue chain is Cytochrome b6-f complex subunit 5 (40 aa).

The chain crosses the membrane as a helical span at residues 5 to 25 (ILLGMVLGFVPVTIAGLLVAA).

The protein belongs to the PetG family. As to quaternary structure, the 4 large subunits of the cytochrome b6-f complex are cytochrome b6, subunit IV (17 kDa polypeptide, PetD), cytochrome f and the Rieske protein, while the 4 small subunits are PetG, PetL, PetM and PetN. The complex functions as a dimer.

It localises to the cell inner membrane. Its function is as follows. Component of the cytochrome b6-f complex, which mediates electron transfer between photosystem II (PSII) and photosystem I (PSI), cyclic electron flow around PSI, and state transitions. PetG is required for either the stability or assembly of the cytochrome b6-f complex. In Gloeobacter violaceus (strain ATCC 29082 / PCC 7421), this protein is Cytochrome b6-f complex subunit 5.